Consider the following 212-residue polypeptide: Thiamine-phosphate synthase (212 aa).

4-amino-2-methyl-5-(diphosphooxymethyl)pyrimidine contacts are provided by residues 39–43 (QLREK) and N71. Residues D72 and D91 each coordinate Mg(2+). S110 is a 4-amino-2-methyl-5-(diphosphooxymethyl)pyrimidine binding site. 2-[(2R,5Z)-2-carboxy-4-methylthiazol-5(2H)-ylidene]ethyl phosphate is bound at residue 137–139 (TPT). A 4-amino-2-methyl-5-(diphosphooxymethyl)pyrimidine-binding site is contributed by K140. G168 is a binding site for 2-[(2R,5Z)-2-carboxy-4-methylthiazol-5(2H)-ylidene]ethyl phosphate.

The protein belongs to the thiamine-phosphate synthase family. Mg(2+) serves as cofactor.

The catalysed reaction is 2-[(2R,5Z)-2-carboxy-4-methylthiazol-5(2H)-ylidene]ethyl phosphate + 4-amino-2-methyl-5-(diphosphooxymethyl)pyrimidine + 2 H(+) = thiamine phosphate + CO2 + diphosphate. It carries out the reaction 2-(2-carboxy-4-methylthiazol-5-yl)ethyl phosphate + 4-amino-2-methyl-5-(diphosphooxymethyl)pyrimidine + 2 H(+) = thiamine phosphate + CO2 + diphosphate. It catalyses the reaction 4-methyl-5-(2-phosphooxyethyl)-thiazole + 4-amino-2-methyl-5-(diphosphooxymethyl)pyrimidine + H(+) = thiamine phosphate + diphosphate. It functions in the pathway cofactor biosynthesis; thiamine diphosphate biosynthesis; thiamine phosphate from 4-amino-2-methyl-5-diphosphomethylpyrimidine and 4-methyl-5-(2-phosphoethyl)-thiazole: step 1/1. Condenses 4-methyl-5-(beta-hydroxyethyl)thiazole monophosphate (THZ-P) and 2-methyl-4-amino-5-hydroxymethyl pyrimidine pyrophosphate (HMP-PP) to form thiamine monophosphate (TMP). The protein is Thiamine-phosphate synthase of Acidothermus cellulolyticus (strain ATCC 43068 / DSM 8971 / 11B).